The chain runs to 125 residues: RxLR effector protein Avh6 (125 aa).

The first 25 residues, 1 to 25 (MRLSSTTFVVLAAVLLASGTAVSKA), serve as a signal peptide directing secretion. Residues 48 to 70 (RFLRSHHTEDGKAKLSNYDNEER) carry the RxLR-dEER motif.

Belongs to the RxLR effector family.

It is found in the secreted. It localises to the host cell. In terms of biological role, effector that suppresses plant defense responses during the early stages of pathogen infection. Suppresses cell death induced by effectors and PAMPs in plant hosts. Triggers a hypersensitive response (HR) in the presence of Rps1d. Suppresses BAX-induced cell death and enhanced P.capsici infection in Nicotiana benthamiana. Also suppresses effector-triggered immunity induction by associating with Avr1b and Rps1b, suggesting a role in suppressing plant immunity. This chain is RxLR effector protein Avh6, found in Phytophthora sojae (Soybean stem and root rot agent).